Here is an 868-residue protein sequence, read N- to C-terminus: Leucine--tRNA ligase (868 aa).

The 'HIGH' region motif lies at 42–52 (PYPSGKLHMGH). The 'KMSKS' region motif lies at 627 to 631 (KMSKS). Lys630 is an ATP binding site.

The protein belongs to the class-I aminoacyl-tRNA synthetase family.

It is found in the cytoplasm. The catalysed reaction is tRNA(Leu) + L-leucine + ATP = L-leucyl-tRNA(Leu) + AMP + diphosphate. The chain is Leucine--tRNA ligase from Pseudomonas putida (strain GB-1).